The sequence spans 65 residues: Large ribosomal subunit protein bL35 (65 aa).

The protein belongs to the bacterial ribosomal protein bL35 family.

In Chlorobium phaeovibrioides (strain DSM 265 / 1930) (Prosthecochloris vibrioformis (strain DSM 265)), this protein is Large ribosomal subunit protein bL35.